Consider the following 74-residue polypeptide: Putative membrane protein insertion efficiency factor (74 aa).

This sequence belongs to the UPF0161 family.

The protein resides in the cell inner membrane. Could be involved in insertion of integral membrane proteins into the membrane. This is Putative membrane protein insertion efficiency factor from Syntrophus aciditrophicus (strain SB).